The chain runs to 1020 residues: Nucleotide-binding oligomerization domain-containing protein 2 (1020 aa).

2 CARD domains span residues 6-104 (CDMC…GSWD) and 106-200 (HSLH…AECQ). The short motif at 43–57 (WDVLSREDYEGLSLP) is the ATG16L1-binding motif element. Residues threonine 219, tyrosine 232, threonine 233, glycine 282, serine 283, glycine 284, lysine 285, serine 286, and threonine 287 each coordinate ADP. The interval 221–254 (DGSENLCLEDIYTENILELQTEVGTAGALQKSPA) is required for CARD9 binding. Residues 273–600 (DTILVVGEAG…AAFYLAVSAD (328 aa)) form the NACHT domain. Cysteine 375 carries the S-palmitoyl cysteine lipid modification. Residue histidine 583 coordinates ADP. 10 LRR repeats span residues 685-709 (ARAR…VPGE), 726-749 (LYEM…HLKL), 766-792 (LQHL…QLRP), 794-817 (LGVC…TLVE), 822-845 (CEQL…SMAK), 850-873 (KQNF…VLAQ), 906-929 (HQNL…ALAL), 934-962 (NKSL…LKRN), 963-985 (STLK…ALLQ), and 1005-1019 (LEEI…ARLL).

This sequence belongs to the NOD1-NOD2 family. Homooligomer: homooligomerizes following muramyl dipeptide (MDP)-binding, promoting RIPK2 recruitment. Interacts (via CARD domain) with RIPK2 (via CARD domain). Following RIPK2 recruitment, RIPK2 homooligomerizes via its CARD domain and forms long filaments named RIPosomes. Interacts (via CARD domain) with ubiquitin; inhibiting interaction with RIPK2. Component of a signaling complex consisting of ARHGEF2, NOD2 and RIPK2. Interacts with ANKRD17 (via N-terminus). Interacts with HSPA1A; the interaction enhances NOD2 stability. Interacts (via both CARD domains) with HSP90; the interaction enhances NOD2 stability. Interacts (via CARD domain) with SOCS3; the interaction promotes NOD2 degradation. Interacts (via CARD domain) with ERBIN; the interaction inhibits activation of NOD2. Interacts with MAPKBP1; the interaction is enhanced in the presence of muramyl dipeptide (MDP) and inhibits NOD2 homooligomerization and activation. Interacts with INAVA; the interaction takes place upon Pattern recognition receptor (PRR) stimulation. Interacts (via NACHT domain) with CARD9. Interacts (via CARD domain) with CASP1; this interaction leads to IL1B processing. Also interacts with CASP4. Interacts with NLRP1; this interaction is enhanced in the presence of muramyl dipeptide (MDP) and leads to increased IL1B release. Interacts with NLRP12; this interaction promotes degradation of NOD2 through the ubiquitin-proteasome pathway. Interacts with ANKHD1, C10orf67, CHMP5, DOCK7, ENTR1, KRT15, LDOC1, PPP1R12C, PPP2R3B, TRIM41 and VIM. Interacts with MAVS; interaction takes place following single-stranded RNA (ssRNA)-binding. Interacts with ATG16L1. Interacts with Irgm1; promoting Irgm1 'Lys-63'-linked polyubiquitination, which is required for interactions with the core autophagy factors. Palmitoylated by ZDHHC5; palmitoylation is required for proper recruitment to the bacterial entry site and hence for proper signaling upon cognate peptidoglycan detection. Palmitoylation promotes localization to the cell membrane. Palmitoylation protects from SQSTM1/p62-dependent autophagic degradation. Post-translationally, polyubiquitinated by TRIM27, leading to proteasome-mediated degradation. Polyubiquitinated and degraded following muramyl dipeptide (MDP) stimulation, conferring MDP tolerance and preventing septic shock. In terms of processing, degraded via selective autophagy following interaction with Irgm1. Irgm1 promotes NOD2-RIPK2 RIPosome recruitment to autophagosome membranes, promoting their SQSTM1/p62-dependent autophagic degradation. O-glycosylated by OGT, O-GlcNAcylation increases protein stability. Expressed in monocytes, macrophages, dendritic cells, hepatocytes, preadipocytes, epithelial cells of oral cavity, lung and intestine. In intestine, highly expressed in ileal Paneth cells of the crypt and in intestinal stem cells. Also expressed in neurons of several brain regions including the hypothalamus.

It is found in the cell membrane. It localises to the basolateral cell membrane. The protein localises to the cytoplasm. The protein resides in the mitochondrion. ADP-binding promotes an inactive closed conformation. Pattern recognition receptor (PRR) that detects bacterial peptidoglycan fragments and other danger signals and plays an important role in gastrointestinal immunity. Specifically activated by muramyl dipeptide (MDP), a fragment of bacterial peptidoglycan found in every bacterial peptidoglycan type. NOD2 specifically recognizes and binds 6-O-phospho-MDP, the phosphorylated form of MDP, which is generated by NAGK. 6-O-phospho-MDP-binding triggers oligomerization that facilitates the binding and subsequent activation of the proximal adapter receptor-interacting RIPK2. Following recruitment, RIPK2 undergoes 'Met-1'- (linear) and 'Lys-63'-linked polyubiquitination by E3 ubiquitin-protein ligases XIAP, BIRC2, BIRC3 and the LUBAC complex, becoming a scaffolding protein for downstream effectors, triggering activation of the NF-kappa-B and MAP kinases signaling. This in turn leads to the transcriptional activation of hundreds of genes involved in immune response. Its ability to detect bacterial MDP plays a central role in maintaining the equilibrium between intestinal microbiota and host immune responses to control inflammation. An imbalance in this relationship results in dysbiosis, whereby pathogenic bacteria prevail on commensals, causing damage in the intestinal epithelial barrier as well as allowing bacterial invasion and inflammation. Acts as a regulator of appetite by sensing MDP in a subset of brain neurons: microbiota-derived MDP reach the brain, where they bind and activate NOD2 in inhibitory hypothalamic neurons, decreasing neuronal activity, thereby regulating satiety and body temperature. NOD2-dependent MDP-sensing of bacterial cell walls in the intestinal epithelial compartment contributes to sustained postnatal growth upon undernutrition. Also plays a role in antiviral response by acting as a sensor of single-stranded RNA (ssRNA) from viruses: upon ssRNA-binding, interacts with MAVS, leading to activation of interferon regulatory factor-3/IRF3 and expression of type I interferon. Also acts as a regulator of autophagy in dendritic cells via its interaction with ATG16L1, possibly by recruiting ATG16L1 at the site of bacterial entry. NOD2 activation in the small intestine crypt also contributes to intestinal stem cells survival and function: acts by promoting mitophagy via its association with ATG16L1. In addition to its main role in innate immunity, also regulates the adaptive immune system by acting as regulator of helper T-cell and regulatory T-cells (Tregs). Besides recognizing pathogens, also involved in the endoplasmic reticulum stress response: acts by sensing and binding to the cytosolic metabolite sphingosine-1-phosphate generated in response to endoplasmic reticulum stress, initiating an inflammation process that leads to activation of the NF-kappa-B and MAP kinases signaling. May also be involved in NLRP1 activation following activation by MDP, leading to CASP1 activation and IL1B release in macrophages. This is Nucleotide-binding oligomerization domain-containing protein 2 from Mus musculus (Mouse).